Consider the following 159-residue polypeptide: Small ribosomal subunit protein uS4 (159 aa).

The region spanning 106–158 is the S4 RNA-binding domain; it reads RRLQTIVYRMGLAKSIHHARQLIVHGHVAVAGRRVTSPGFLVPRELEDKISLI.

The protein belongs to the universal ribosomal protein uS4 family. As to quaternary structure, part of the 30S ribosomal subunit. Contacts protein S5. The interaction surface between S4 and S5 is involved in control of translational fidelity.

In terms of biological role, one of the primary rRNA binding proteins, it binds directly to 16S rRNA where it nucleates assembly of the body of the 30S subunit. Its function is as follows. With S5 and S12 plays an important role in translational accuracy. The chain is Small ribosomal subunit protein uS4 from Pyrobaculum aerophilum (strain ATCC 51768 / DSM 7523 / JCM 9630 / CIP 104966 / NBRC 100827 / IM2).